The chain runs to 149 residues: YbbR-like domain-containing protein in def 5'region (149 aa).

One can recognise a YbbR-like domain in the interval 1–68 (IPVEVLAQGA…LRPNRVRVVE (68 aa)).

The sequence is that of YbbR-like domain-containing protein in def 5'region from Thermus thermophilus.